The primary structure comprises 164 residues: Large ribosomal subunit protein uL11 (164 aa).

The protein belongs to the universal ribosomal protein uL11 family. In terms of assembly, part of the ribosomal stalk of the 50S ribosomal subunit. Interacts with L10 and the large rRNA to form the base of the stalk. L10 forms an elongated spine to which L12 dimers bind in a sequential fashion forming a multimeric L10(L12)X complex.

In terms of biological role, forms part of the ribosomal stalk which helps the ribosome interact with GTP-bound translation factors. This is Large ribosomal subunit protein uL11 from Pyrococcus furiosus (strain ATCC 43587 / DSM 3638 / JCM 8422 / Vc1).